We begin with the raw amino-acid sequence, 225 residues long: uncharacterized protein (225 aa).

The disordered stretch occupies residues 1 to 48; that stretch reads MTQLVTRARSARGSTLGEQPRQDQLDFADHTGTAGDGNDGAAAASGPV. Residues 20–29 show a composition bias toward basic and acidic residues; the sequence is PRQDQLDFAD. The region spanning 64–136 is the HTH merR-type domain; the sequence is GYRGPSACQI…LHNIRVAVDH (73 aa). Residues 201–225 are disordered; sequence DGGESIAAPEDELASRRKHRDRKIG. Positions 216–225 are enriched in basic residues; sequence RRKHRDRKIG.

This is an uncharacterized protein from Mycobacterium tuberculosis (strain CDC 1551 / Oshkosh).